Reading from the N-terminus, the 248-residue chain is MGLSRVRAVFFDLDNTLIDTAGASRRGMLEVIKLLQSKYHYKEEAEIICDKVQVKLSKECFHPYSTCITDVRTSHWEEAIQETKGGADNRKLAEECYFLWKSTRLQHMILADDVKAMLTELRKEVRLLLLTNGDRQTQREKIEACACQSYFDAIVIGGEQKEEKPAPSIFYHCCDLLGVQPGDCVMVGDTLETDIQGGLNAGLKATVWINKSGRVPLTSSPMPHYMVSSVLELPALLQSIDCKVSMSV.

A Mg(2+)-binding site is contributed by aspartate 12. Leucine 13, aspartate 14, threonine 131, asparagine 132, and lysine 164 together coordinate phosphate. Aspartate 14 contributes to the Mg(2+) binding site. Aspartate 189 provides a ligand contact to Mg(2+).

Belongs to the HAD-like hydrolase superfamily. NANP family. Requires Mg(2+) as cofactor.

It catalyses the reaction N-acetylneuraminate 9-phosphate + H2O = N-acetylneuraminate + phosphate. The enzyme catalyses N-glycoloylneuraminate 9-phosphate + H2O = N-glycoloylneuraminate + phosphate. It functions in the pathway amino-sugar metabolism; N-acetylneuraminate biosynthesis. With respect to regulation, inhibited by calcium. Inhibited by vanadate, sodium orthovanate and phosphonate. Catalyzes the dephosphorylation of N-acylneuraminate 9-phosphate (Neu5Ac-9-P) to sialic acid N-acetylneuraminic acid (Neu5Ac). May also use N-glycoloylneuraminate 9-phosphate as substrate. The chain is N-acylneuraminate-9-phosphatase from Mus musculus (Mouse).